Reading from the N-terminus, the 150-residue chain is VEARSRILKQTPNRTGKRLTRAQLITDSPGSTSSVTSINSRAPDLPSESGSPVYVNQVKVRVSDALLEKKKLMAARERKATKTLGIILGAFIVCWLPFFIISLAMPICKDACWFHLAIFDFFTWLGYLNSLINPIIYTMFNEDFKQAFHK.

The Extracellular portion of the chain corresponds to 1-83 (VEARSRILKQ…AARERKATKT (83 aa)). Positions 27 to 40 (DSPGSTSSVTSINS) are enriched in polar residues. Residues 27–50 (DSPGSTSSVTSINSRAPDLPSESG) are disordered. A helical membrane pass occupies residues 84–105 (LGIILGAFIVCWLPFFIISLAM). Residues 106 to 115 (PICKDACWFH) are Cytoplasmic-facing. Residues 116-138 (LAIFDFFTWLGYLNSLINPIIYT) traverse the membrane as a helical segment. The short motif at 133–137 (NPIIY) is the NPxxY motif; important for ligand-induced conformation changes and signaling element. Topologically, residues 139–150 (MFNEDFKQAFHK) are extracellular.

This sequence belongs to the G-protein coupled receptor 1 family. In terms of assembly, homodimer. Heterodimer with HTR1D. Post-translationally, phosphorylated. Desensitization of the receptor may be mediated by its phosphorylation. In terms of processing, palmitoylated.

It localises to the cell membrane. G-protein coupled receptor for 5-hydroxytryptamine (serotonin). Also functions as a receptor for ergot alkaloid derivatives, various anxiolytic and antidepressant drugs and other psychoactive substances, such as lysergic acid diethylamide (LSD). Ligand binding causes a conformation change that triggers signaling via guanine nucleotide-binding proteins (G proteins) and modulates the activity of downstream effectors, such as adenylate cyclase. HTR1B is coupled to G(i)/G(o) G alpha proteins and mediates inhibitory neurotransmission by inhibiting adenylate cyclase activity. Arrestin family members inhibit signaling via G proteins and mediate activation of alternative signaling pathways. Regulates the release of 5-hydroxytryptamine, dopamine and acetylcholine in the brain, and thereby affects neural activity, nociceptive processing, pain perception, mood and behavior. Besides, plays a role in vasoconstriction of cerebral arteries. In Sus scrofa (Pig), this protein is 5-hydroxytryptamine receptor 1B (HTR1B).